A 124-amino-acid chain; its full sequence is Urease subunit beta (124 aa).

The protein belongs to the urease beta subunit family. In terms of assembly, heterotrimer of UreA (gamma), UreB (beta) and UreC (alpha) subunits. Three heterotrimers associate to form the active enzyme.

The protein resides in the cytoplasm. The catalysed reaction is urea + 2 H2O + H(+) = hydrogencarbonate + 2 NH4(+). The protein operates within nitrogen metabolism; urea degradation; CO(2) and NH(3) from urea (urease route): step 1/1. The polypeptide is Urease subunit beta (Ureaplasma parvum serovar 3 (strain ATCC 27815 / 27 / NCTC 11736)).